Reading from the N-terminus, the 549-residue chain is CTP synthase (549 aa).

The interval 1–267 is amidoligase domain; it reads MTKFVFVTGG…AAQVLSLLNL (267 aa). Residue Ser13 coordinates CTP. Ser13 is a binding site for UTP. Residues 14-19 and Asp71 each bind ATP; that span reads SIGKGI. Mg(2+) contacts are provided by Asp71 and Glu141. Residues 148-150, 188-193, and Lys224 each bind CTP; these read DIE and KTKPTQ. Residues 188 to 193 and Lys224 each bind UTP; that span reads KTKPTQ. Residues 292 to 534 enclose the Glutamine amidotransferase type-1 domain; that stretch reads EIAIVGKYVR…VQAARTHSSD (243 aa). Residue Gly354 participates in L-glutamine binding. The active-site Nucleophile; for glutamine hydrolysis is the Cys381. Residues 382–385, Glu405, and Arg462 contribute to the L-glutamine site; that span reads LGMQ. Active-site residues include His507 and Glu509.

Belongs to the CTP synthase family. Homotetramer.

The enzyme catalyses UTP + L-glutamine + ATP + H2O = CTP + L-glutamate + ADP + phosphate + 2 H(+). It catalyses the reaction L-glutamine + H2O = L-glutamate + NH4(+). It carries out the reaction UTP + NH4(+) + ATP = CTP + ADP + phosphate + 2 H(+). It participates in pyrimidine metabolism; CTP biosynthesis via de novo pathway; CTP from UDP: step 2/2. Allosterically activated by GTP, when glutamine is the substrate; GTP has no effect on the reaction when ammonia is the substrate. The allosteric effector GTP functions by stabilizing the protein conformation that binds the tetrahedral intermediate(s) formed during glutamine hydrolysis. Inhibited by the product CTP, via allosteric rather than competitive inhibition. Catalyzes the ATP-dependent amination of UTP to CTP with either L-glutamine or ammonia as the source of nitrogen. Regulates intracellular CTP levels through interactions with the four ribonucleotide triphosphates. This chain is CTP synthase, found in Cyanothece sp. (strain PCC 7425 / ATCC 29141).